We begin with the raw amino-acid sequence, 255 residues long: Ribosomal RNA large subunit methyltransferase E (255 aa).

The S-adenosyl-L-methionine site is built by Gly50, Trp52, Asp68, Asp84, and Asp108. The active-site Proton acceptor is the Lys148. A TRAM domain is found at 195-253 (PVRSGEIYDVTVDSVGRTGDGIAMIQGFAVIVKNASPGERLRIKIGPVKQRFAFASILE).

This sequence belongs to the class I-like SAM-binding methyltransferase superfamily. RNA methyltransferase RlmE family.

Its subcellular location is the cytoplasm. The enzyme catalyses uridine(2552) in 23S rRNA + S-adenosyl-L-methionine = 2'-O-methyluridine(2552) in 23S rRNA + S-adenosyl-L-homocysteine + H(+). Its function is as follows. Specifically methylates the uridine in position 2552 of 23S rRNA at the 2'-O position of the ribose in the fully assembled 50S ribosomal subunit. The sequence is that of Ribosomal RNA large subunit methyltransferase E from Methanothrix thermoacetophila (strain DSM 6194 / JCM 14653 / NBRC 101360 / PT) (Methanosaeta thermophila).